A 137-amino-acid chain; its full sequence is Small heat shock protein IbpA (137 aa).

The region spanning 28–137 (SQGNGGYPPY…TLKPRRIEIK (110 aa)) is the sHSP domain.

Belongs to the small heat shock protein (HSP20) family. As to quaternary structure, monomer. Forms homomultimers of about 100-150 subunits at optimal growth temperatures. Conformation changes to monomers at high temperatures or high ionic concentrations.

It localises to the cytoplasm. In terms of biological role, associates with aggregated proteins, together with IbpB, to stabilize and protect them from irreversible denaturation and extensive proteolysis during heat shock and oxidative stress. Aggregated proteins bound to the IbpAB complex are more efficiently refolded and reactivated by the ATP-dependent chaperone systems ClpB and DnaK/DnaJ/GrpE. Its activity is ATP-independent. This Serratia proteamaculans (strain 568) protein is Small heat shock protein IbpA.